Here is a 294-residue protein sequence, read N- to C-terminus: MSPSRPGFSCSWLPYLLVLPQLAITAIFFLWPAGEALWYSVQTLDPFGLSSEFVGLSNFIQLFQDEYYLASFYTTLIFSALVAGIGLNVSLFLAAMVDYVLRGSRLYQTLLILPYAVAPAVAAVLWIFLFDPGLGLITHALAKLGYSWNHAQNSGQAMFLVVLASVWKQISYNFLFFLAALQSIPKSLVEAAAIDGAGPVRRFFNLVLPLISPVSFFLLVVNLVYAFFDTFPVIDAATGGGPVQATTTLIYKIYREGFAGLDLSSSAAQSVILMLLVIGLTVIQFRFVERKVRY.

Topologically, residues 1–11 are cytoplasmic; that stretch reads MSPSRPGFSCS. A helical transmembrane segment spans residues 12-32; sequence WLPYLLVLPQLAITAIFFLWP. Residues 33 to 80 are Periplasmic-facing; that stretch reads AGEALWYSVQTLDPFGLSSEFVGLSNFIQLFQDEYYLASFYTTLIFSA. Residues 72-284 enclose the ABC transmembrane type-1 domain; sequence FYTTLIFSAL…LLVIGLTVIQ (213 aa). A helical transmembrane segment spans residues 81–101; sequence LVAGIGLNVSLFLAAMVDYVL. The Cytoplasmic portion of the chain corresponds to 102–109; the sequence is RGSRLYQT. A helical membrane pass occupies residues 110-130; that stretch reads LLILPYAVAPAVAAVLWIFLF. Residues 131–157 lie on the Periplasmic side of the membrane; that stretch reads DPGLGLITHALAKLGYSWNHAQNSGQA. Residues 158–178 form a helical membrane-spanning segment; sequence MFLVVLASVWKQISYNFLFFL. The Cytoplasmic segment spans residues 179 to 207; it reads AALQSIPKSLVEAAAIDGAGPVRRFFNLV. A helical membrane pass occupies residues 208–228; that stretch reads LPLISPVSFFLLVVNLVYAFF. Over 229 to 262 the chain is Periplasmic; sequence DTFPVIDAATGGGPVQATTTLIYKIYREGFAGLD. Residues 263 to 283 form a helical membrane-spanning segment; sequence LSSSAAQSVILMLLVIGLTVI. At 284-294 the chain is on the cytoplasmic side; sequence QFRFVERKVRY.

The protein belongs to the binding-protein-dependent transport system permease family. UgpAE subfamily. The complex is composed of two ATP-binding proteins (UgpC), two transmembrane proteins (UgpA and UgpE) and a solute-binding protein (UgpB).

It is found in the cell inner membrane. Part of the ABC transporter complex UgpBAEC involved in sn-glycerol-3-phosphate (G3P) import. Probably responsible for the translocation of the substrate across the membrane. This Yersinia pseudotuberculosis serotype I (strain IP32953) protein is sn-glycerol-3-phosphate transport system permease protein UgpA (ugpA).